Here is a 154-residue protein sequence, read N- to C-terminus: Keratin-associated protein 9-9 (154 aa).

14 repeat units span residues 8–12 (CCQPT), 13–17 (CCRTT), 18–22 (CCRTT), 37–41 (CCQPS), 42–46 (CCVSS), 51–55 (CCRPA), 56–60 (CCQNT), 61–65 (CCRTT), 66–70 (CCQPT), 75–79 (CCGQT), 124–128 (CCRPA), 129–133 (CCETT), 134–137 (CCRT), and 148–152 (CCQPS). Residues 8 to 152 (CCQPTCCRTT…TCVSSCCQPS (145 aa)) are 14 X 5 AA repeats of C-C-[RQVGE]-[SPSTNQ]-[TASL].

This sequence belongs to the KRTAP type 9 family. In terms of assembly, interacts with hair keratins.

Its function is as follows. In the hair cortex, hair keratin intermediate filaments are embedded in an interfilamentous matrix, consisting of hair keratin-associated proteins (KRTAP), which are essential for the formation of a rigid and resistant hair shaft through their extensive disulfide bond cross-linking with abundant cysteine residues of hair keratins. The matrix proteins include the high-sulfur and high-glycine-tyrosine keratins. The chain is Keratin-associated protein 9-9 (KRTAP9-9) from Homo sapiens (Human).